Here is a 246-residue protein sequence, read N- to C-terminus: MELTEKVVILKTGKFKENDLWVRFLSATRGVQNAFAFGGSRSRRRFGGCLEPFSQVLFKTGTNKTGTYQVLQEGSLVKGYPGIRSDFRKMGLAANCFKFIESAVLERDGNRAVFDLLTETLDVIEEADPDDFFPLFFRAKVAFEQGYNPDFTICAQCGKPLFSSRPVVFNIEKGQLNCLDCNDGRQGETISSGTARTLAWIQDTGPASWINLRLPADIRQECFSVMDRFMAYHMGVVWEGNGYRKI.

Belongs to the RecO family.

In terms of biological role, involved in DNA repair and RecF pathway recombination. The protein is DNA repair protein RecO of Maridesulfovibrio salexigens (strain ATCC 14822 / DSM 2638 / NCIMB 8403 / VKM B-1763) (Desulfovibrio salexigens).